The chain runs to 620 residues: Glutathione-regulated potassium-efflux system protein KefC (620 aa).

Transmembrane regions (helical) follow at residues 4–24 (HTLLQALIYLGSAALIVPIAV), 26–46 (LGLGSVLGYLIAGCIIGPWGL), 54–74 (SILHFAEIGVVLMLFVIGLEL), 90–110 (GALQMVVCGGLIGLFCMFLGL), 114–134 (VAELIGMTLALSSTAIAMQAM), 149–169 (FAVLLFQDIAAIPLVAMIPLL), 178–198 (LGAFALSALKVAGALALVVVL), 218–238 (VFSAVALFLVFGFGLLLEEVG), 270–290 (GLLLGLFFIGVGMSIDFGTLV), 294–314 (LRILLLLAGFLAIKIVMLWLV), 327–347 (WFAVLLGQGSEFAFVVFGAAQ), and 359–379 (ALTLAVALSMAATPIFLVLLT). Residues 399 to 518 (QPRVIVAGFG…AGVAMPERET (120 aa)) form the RCK N-terminal domain. Residues 599 to 620 (QGTAEGKHSGEVADEPEVKPSI) are disordered.

This sequence belongs to the monovalent cation:proton antiporter 2 (CPA2) transporter (TC 2.A.37) family. KefC subfamily. In terms of assembly, homodimer. Interacts with the regulatory subunit KefF.

It localises to the cell inner membrane. In terms of biological role, pore-forming subunit of a potassium efflux system that confers protection against electrophiles. Catalyzes K(+)/H(+) antiport. The sequence is that of Glutathione-regulated potassium-efflux system protein KefC from Salmonella paratyphi B (strain ATCC BAA-1250 / SPB7).